Consider the following 427-residue polypeptide: MAP kinase-interacting serine/threonine-protein kinase 1 (427 aa).

Residues 1–11 show a composition bias toward basic and acidic residues; the sequence is MVSSQKLEKPI. Residues 1 to 37 are disordered; that stretch reads MVSSQKLEKPIEMGSSEPLPIVDSDKRRKKKRKTRAT. Residue Thr34 is modified to Phosphothreonine; by PAK2. Ser39 bears the Phosphoserine; by PAK2 mark. The region spanning 49–333 is the Protein kinase domain; the sequence is QLTSELLGEG…AAQVLQHPWV (285 aa). Residues 55 to 63 and Lys78 contribute to the ATP site; that span reads LGEGAYAKV. Catalysis depends on Asp170, which acts as the Proton acceptor. 2 positions are modified to phosphoserine: Ser180 and Ser185. 3 positions are modified to phosphothreonine: Thr209, Thr214, and Thr344. Residues 407-427 are disordered; that stretch reads RALAQAGRSRDANPCLTPAGL.

This sequence belongs to the protein kinase superfamily. CAMK Ser/Thr protein kinase family. In terms of assembly, interacts with the C-terminal regions of EIF4G1 and EIF4G2. Also binds to dephosphorylated ERK1 and ERK2, and to the p38 kinases. The cofactor is Mg(2+). In terms of processing, dual phosphorylation of Thr-209 and Thr-214 activates the kinase. Phosphorylation of Thr-344 activates the kinase. MAPK3/ERK1 is one of the kinases which activate MKNK1/MNK1. Phosphorylation by PAK2 leads to a reduced phosphorylation of EIF4G1. Ubiquitously expressed in all tissues examined, with high levels in skeletal muscle.

It carries out the reaction L-seryl-[protein] + ATP = O-phospho-L-seryl-[protein] + ADP + H(+). The catalysed reaction is L-threonyl-[protein] + ATP = O-phospho-L-threonyl-[protein] + ADP + H(+). Its activity is regulated as follows. Phosphorylated and activated by the p38 kinases and kinases in the Erk pathway. Functionally, may play a role in the response to environmental stress and cytokines. Appears to regulate translation by phosphorylating EIF4E, thus increasing the affinity of this protein for the 7-methylguanosine-containing mRNA cap. In Mus musculus (Mouse), this protein is MAP kinase-interacting serine/threonine-protein kinase 1 (Mknk1).